The chain runs to 284 residues: 4-diphosphocytidyl-2-C-methyl-D-erythritol kinase (284 aa).

Lys14 is a catalytic residue. 98–108 serves as a coordination point for ATP; it reads PMGGGLGGGSS. Asp140 is an active-site residue.

It belongs to the GHMP kinase family. IspE subfamily.

The catalysed reaction is 4-CDP-2-C-methyl-D-erythritol + ATP = 4-CDP-2-C-methyl-D-erythritol 2-phosphate + ADP + H(+). It participates in isoprenoid biosynthesis; isopentenyl diphosphate biosynthesis via DXP pathway; isopentenyl diphosphate from 1-deoxy-D-xylulose 5-phosphate: step 3/6. Catalyzes the phosphorylation of the position 2 hydroxy group of 4-diphosphocytidyl-2C-methyl-D-erythritol. The chain is 4-diphosphocytidyl-2-C-methyl-D-erythritol kinase from Shewanella piezotolerans (strain WP3 / JCM 13877).